A 490-amino-acid polypeptide reads, in one-letter code: Aspartyl/glutamyl-tRNA(Asn/Gln) amidotransferase subunit B (490 aa).

Belongs to the GatB/GatE family. GatB subfamily. As to quaternary structure, heterotrimer of A, B and C subunits.

It catalyses the reaction L-glutamyl-tRNA(Gln) + L-glutamine + ATP + H2O = L-glutaminyl-tRNA(Gln) + L-glutamate + ADP + phosphate + H(+). The enzyme catalyses L-aspartyl-tRNA(Asn) + L-glutamine + ATP + H2O = L-asparaginyl-tRNA(Asn) + L-glutamate + ADP + phosphate + 2 H(+). Its function is as follows. Allows the formation of correctly charged Asn-tRNA(Asn) or Gln-tRNA(Gln) through the transamidation of misacylated Asp-tRNA(Asn) or Glu-tRNA(Gln) in organisms which lack either or both of asparaginyl-tRNA or glutaminyl-tRNA synthetases. The reaction takes place in the presence of glutamine and ATP through an activated phospho-Asp-tRNA(Asn) or phospho-Glu-tRNA(Gln). The chain is Aspartyl/glutamyl-tRNA(Asn/Gln) amidotransferase subunit B from Burkholderia ambifaria (strain MC40-6).